A 252-amino-acid chain; its full sequence is AISLLMCLILSALCASSESAVVHGDDFAAERAVKSSPYLVLSPADEMVGMSTANEAFDKSPSYYDDDDDDFVNNEKRRLRFHKRRIRFHKRPQEVSGLKPVMMSRASASADENSLFDLYNTDGAMYQRELRAPRLRFYSLRKRAAGDEDKAEEHNPETESHSRRKRSALTPSIRSLRSSLESGIAKISINQDLKAIADMLIVEQKQEREKYLADLRQRLLNKGKRSSEVALAASDKGDEERELLNTLSNLLE.

The N-terminal stretch at 1 to 19 (AISLLMCLILSALCASSES) is a signal peptide. 3 consecutive propeptides follow at residues 20-75 (AVVH…VNNE), 92-130 (PQEVSGLKPVMMSRASASADENSLFDLYNTDGAMYQREL), and 144-185 (AAGD…SGIA). Positions 145–161 (AGDEDKAEEHNPETESH) are enriched in basic and acidic residues. A disordered region spans residues 145–171 (AGDEDKAEEHNPETESHSRRKRSALTP). Lys-222 is subject to Lysine amide.

It belongs to the molluscan ELH family. Bag cell neurons.

The protein resides in the secreted. ELH acts as a neurotransmitter locally, upon neurons of the abdominal ganglion and as a hormone by diffusing into the circulating hemolymph and modulating the activity of other organs. It specifically causes contraction of smooth muscle in the ovotestis and expulsion of the egg string. Functionally, alpha-BCP decreases the activity of a cluster of neurons in the left upper quadrant of the abdominal ganglion. In terms of biological role, beta-BCP specifically excites 2 neurons, L1 and R1, in the abdominal ganglion. The chain is ELH type 2 (ELH2) from Aplysia parvula (Dwarf sea hare).